Consider the following 353-residue polypeptide: Abasic site processing protein HMCES (353 aa).

Catalysis depends on cysteine 2, which acts as the Nucleophile. Cysteine 2 is subject to Thiazolidine linkage to a ring-opened DNA abasic site. Residue glutamate 127 is part of the active site. Glycyl lysine isopeptide (Lys-Gly) (interchain with G-Cter in SUMO2) cross-links involve residues lysine 148 and lysine 151. Position 160 is a phosphoserine (serine 160). Glycyl lysine isopeptide (Lys-Gly) (interchain with G-Cter in SUMO2) cross-links involve residues lysine 274 and lysine 275. Positions 292 to 353 (TKSPKKEVPD…DEPVAKRPNS (62 aa)) are disordered. Serine 294 bears the Phosphoserine mark. Positions 295–307 (PKKEVPDSPKKDA) are enriched in basic and acidic residues. Lysine 305 is covalently cross-linked (Glycyl lysine isopeptide (Lys-Gly) (interchain with G-Cter in SUMO2)). The residue at position 321 (serine 321) is a Phosphoserine. Residues 332–338 (SLLDRWL) carry the PIP-box motif. Over residues 336–353 (RWLKQEKEDEPVAKRPNS) the composition is skewed to basic and acidic residues. Glycyl lysine isopeptide (Lys-Gly) (interchain with G-Cter in SUMO2) cross-links involve residues lysine 339 and lysine 342.

This sequence belongs to the SOS response-associated peptidase family. In terms of assembly, interacts (via PIP-box motif) with PCNA. Post-translationally, ubiquitinated; the covalent HMCES DNA-protein cross-link is ubiquitinated, leading to its degradation by the proteasome.

It localises to the chromosome. Formation and reversal of DNA-protein cross-link depends on DNA context. Catalyzes formation of the thiazolidine linkage in presence of abasic sites in single-stranded DNA. Mediates the reversal of the thiazolidine cross-link in presence of double stranded DNA. Its function is as follows. Sensor of abasic sites in single-stranded DNA (ssDNA) required to preserve genome integrity by promoting error-free repair of abasic sites. Acts as an enzyme that recognizes and binds abasic sites in ssDNA at replication forks and chemically modifies the lesion by forming a covalent cross-link with DNA: forms a stable thiazolidine linkage between a ring-opened abasic site and the alpha-amino and sulfhydryl substituents of its N-terminal catalytic cysteine residue. Promotes error-free repair by protecting abasic sites from translesion synthesis (TLS) polymerases and endonucleases that are error-prone and would generate mutations and double-strand breaks. The HMCES DNA-protein cross-link is then either reversed or degraded. HMCES is able to catalyze the reversal of its thiazolidine cross-link and cycle between a cross-link and a non-cross-linked state depending on DNA context: mediates self-reversal of the thiazolidine cross-link in double stranded DNA, allowing APEX1 to initiate downstream repair of abasic sites. The HMCES DNA-protein cross-link can also be degraded by the SPRTN metalloprotease following unfolding by the BRIP1/FANCJ helicase. Has preference for ssDNA, but can also accommodate double-stranded DNA with 3' or 5' overhang (dsDNA), and dsDNA-ssDNA 3' junction. Plays a protective role during somatic hypermutation of immunoglobulin genes in B-cells: acts via its ability to form covalent cross-links with abasic sites, thereby limiting the accumulation of deletions in somatic hypermutation target regions. Also involved in class switch recombination (CSR) in B-cells independently of the formation of a DNA-protein cross-link: acts by binding and protecting ssDNA overhangs to promote DNA double-strand break repair through the microhomology-mediated alternative-end-joining (Alt-EJ) pathway. Acts as a protease: mediates autocatalytic processing of its N-terminal methionine in order to expose the catalytic cysteine. The protein is Abasic site processing protein HMCES of Rattus norvegicus (Rat).